The chain runs to 466 residues: Glutamate--tRNA ligase (466 aa).

A 'HIGH' region motif is present at residues 11 to 21; it reads PSPTGFIHLGN. The 'KMSKS' region motif lies at 243 to 247; the sequence is KMSKR. ATP is bound at residue K246.

This sequence belongs to the class-I aminoacyl-tRNA synthetase family. Glutamate--tRNA ligase type 1 subfamily. In terms of assembly, monomer.

The protein localises to the cytoplasm. The enzyme catalyses tRNA(Glu) + L-glutamate + ATP = L-glutamyl-tRNA(Glu) + AMP + diphosphate. Functionally, catalyzes the attachment of glutamate to tRNA(Glu) in a two-step reaction: glutamate is first activated by ATP to form Glu-AMP and then transferred to the acceptor end of tRNA(Glu). This chain is Glutamate--tRNA ligase, found in Cupriavidus taiwanensis (strain DSM 17343 / BCRC 17206 / CCUG 44338 / CIP 107171 / LMG 19424 / R1) (Ralstonia taiwanensis (strain LMG 19424)).